The primary structure comprises 128 residues: Small ribosomal subunit protein uS12 (128 aa).

A 3-methylthioaspartic acid modification is found at aspartate 89. The disordered stretch occupies residues 101–128; sequence SLDTSGVADRRQGRSKYGAKRPKGAAAK. The span at 113–128 shows a compositional bias: basic residues; that stretch reads GRSKYGAKRPKGAAAK.

This sequence belongs to the universal ribosomal protein uS12 family. Part of the 30S ribosomal subunit. Contacts proteins S8 and S17. May interact with IF1 in the 30S initiation complex.

In terms of biological role, with S4 and S5 plays an important role in translational accuracy. Interacts with and stabilizes bases of the 16S rRNA that are involved in tRNA selection in the A site and with the mRNA backbone. Located at the interface of the 30S and 50S subunits, it traverses the body of the 30S subunit contacting proteins on the other side and probably holding the rRNA structure together. The combined cluster of proteins S8, S12 and S17 appears to hold together the shoulder and platform of the 30S subunit. The polypeptide is Small ribosomal subunit protein uS12 (Prosthecochloris aestuarii (strain DSM 271 / SK 413)).